The primary structure comprises 296 residues: Polyamine aminopropyltransferase (296 aa).

The region spanning 16-251 (HLWYFEYYTG…GMWSYTFASK (236 aa)) is the PABS domain. Position 46 (Gln-46) interacts with S-methyl-5'-thioadenosine. 2 residues coordinate spermidine: His-77 and Asp-101. Residues Glu-121 and 152-153 (NG) each bind S-methyl-5'-thioadenosine. Asp-170 functions as the Proton acceptor in the catalytic mechanism. 170–173 (DSTD) contacts spermidine.

Belongs to the spermidine/spermine synthase family. Homodimer or homotetramer.

The protein resides in the cytoplasm. It catalyses the reaction S-adenosyl 3-(methylsulfanyl)propylamine + putrescine = S-methyl-5'-thioadenosine + spermidine + H(+). It functions in the pathway amine and polyamine biosynthesis; spermidine biosynthesis; spermidine from putrescine: step 1/1. Functionally, catalyzes the irreversible transfer of a propylamine group from the amino donor S-adenosylmethioninamine (decarboxy-AdoMet) to putrescine (1,4-diaminobutane) to yield spermidine. The sequence is that of Polyamine aminopropyltransferase from Thermotoga neapolitana (strain ATCC 49049 / DSM 4359 / NBRC 107923 / NS-E).